Consider the following 166-residue polypeptide: Phosphopantetheine adenylyltransferase (166 aa).

Thr9 is a binding site for substrate. Residues 9–10 (TF) and His17 contribute to the ATP site. Substrate contacts are provided by Lys41, Leu78, and Arg92. ATP is bound by residues 93–95 (GLR), Glu103, and 128–134 (HQAIASK).

The protein belongs to the bacterial CoaD family. Homohexamer. Mg(2+) is required as a cofactor.

Its subcellular location is the cytoplasm. The catalysed reaction is (R)-4'-phosphopantetheine + ATP + H(+) = 3'-dephospho-CoA + diphosphate. Its pathway is cofactor biosynthesis; coenzyme A biosynthesis; CoA from (R)-pantothenate: step 4/5. Reversibly transfers an adenylyl group from ATP to 4'-phosphopantetheine, yielding dephospho-CoA (dPCoA) and pyrophosphate. This Roseobacter denitrificans (strain ATCC 33942 / OCh 114) (Erythrobacter sp. (strain OCh 114)) protein is Phosphopantetheine adenylyltransferase.